A 91-amino-acid polypeptide reads, in one-letter code: B3 domain-containing protein Os03g0164300 (91 aa).

Residues 1 to 91 (MTNAKMTFAV…VLVLKVHVLK (91 aa)) constitute a DNA-binding region (TF-B3).

It localises to the nucleus. This is B3 domain-containing protein Os03g0164300 from Oryza sativa subsp. japonica (Rice).